A 494-amino-acid polypeptide reads, in one-letter code: BUB3-interacting and GLEBS motif-containing protein ZNF207 (494 aa).

Positions methionine 1–glutamate 92 are microtubule-binding region. 2 C2H2-type zinc fingers span residues proline 11–histidine 34 and phenylalanine 35–histidine 58. Over residues lysine 100–aspartate 111 the composition is skewed to basic and acidic residues. Disordered regions lie at residues lysine 100–proline 161, asparagine 250–serine 377, and leucine 455–tyrosine 494. The segment covering aspartate 112–serine 121 has biased composition (acidic residues). The span at phenylalanine 127–glutamine 136 shows a compositional bias: polar residues. The segment covering methionine 142 to proline 161 has biased composition (pro residues). Low complexity predominate over residues serine 283 to alanine 300. Over residues leucine 323–glutamate 332 the composition is skewed to polar residues. Residues threonine 342–serine 377 show a composition bias toward low complexity. The segment at alanine 375–glutamine 407 is GLEBS. Positions glycine 463–methionine 483 are enriched in pro residues.

As to quaternary structure, interacts (via GLEBS region) with BUB3.

The protein localises to the nucleus. It is found in the chromosome. The protein resides in the centromere. Its subcellular location is the kinetochore. It localises to the cytoplasm. The protein localises to the cytoskeleton. It is found in the spindle. Kinetochore- and microtubule-binding protein that plays a key role in spindle assembly. ZNF207/BuGZ is mainly composed of disordered low-complexity regions and undergoes phase transition or coacervation to form temperature-dependent liquid droplets. Coacervation promotes microtubule bundling and concentrates tubulin, promoting microtubule polymerization and assembly of spindle and spindle matrix by concentrating its building blocks. Also acts as a regulator of mitotic chromosome alignment by mediating the stability and kinetochore loading of BUB3. Mechanisms by which BUB3 is protected are unclear: according to a first report, ZNF207/BuGZ may act by blocking ubiquitination and proteasomal degradation of BUB3. According to another report, the stabilization is independent of the proteasome. The polypeptide is BUB3-interacting and GLEBS motif-containing protein ZNF207 (Pongo abelii (Sumatran orangutan)).